The primary structure comprises 420 residues: Argininosuccinate synthase (420 aa).

Residues Ala-9–Ser-17 and Ala-35 each bind ATP. L-citrulline-binding residues include Tyr-86 and Ser-91. Ser-114–Asn-122 provides a ligand contact to ATP. 3 residues coordinate L-aspartate: Thr-118, Asn-122, and Asp-123. L-citrulline is bound at residue Asn-122. L-citrulline-binding residues include Arg-126, Ser-179, Ser-188, Glu-273, and Tyr-285.

Belongs to the argininosuccinate synthase family. Type 1 subfamily. As to quaternary structure, homotetramer.

The protein localises to the cytoplasm. The enzyme catalyses L-citrulline + L-aspartate + ATP = 2-(N(omega)-L-arginino)succinate + AMP + diphosphate + H(+). The protein operates within amino-acid biosynthesis; L-arginine biosynthesis; L-arginine from L-ornithine and carbamoyl phosphate: step 2/3. In terms of biological role, catalyzes the eighth step in arginine biosynthesis. Also has a catabolic function as the first enzyme of citrulline utilization as nitrogen source via arginine and the reactions involved in the arginase pathway. The protein is Argininosuccinate synthase (ARG1) of Saccharomyces cerevisiae (strain ATCC 204508 / S288c) (Baker's yeast).